Reading from the N-terminus, the 521-residue chain is Bifunctional purine biosynthesis protein PurH (521 aa).

An MGS-like domain is found at 1–145; sequence MIKQALISVS…KNHRDVTVVV (145 aa).

This sequence belongs to the PurH family.

It carries out the reaction (6R)-10-formyltetrahydrofolate + 5-amino-1-(5-phospho-beta-D-ribosyl)imidazole-4-carboxamide = 5-formamido-1-(5-phospho-D-ribosyl)imidazole-4-carboxamide + (6S)-5,6,7,8-tetrahydrofolate. It catalyses the reaction IMP + H2O = 5-formamido-1-(5-phospho-D-ribosyl)imidazole-4-carboxamide. Its pathway is purine metabolism; IMP biosynthesis via de novo pathway; 5-formamido-1-(5-phospho-D-ribosyl)imidazole-4-carboxamide from 5-amino-1-(5-phospho-D-ribosyl)imidazole-4-carboxamide (10-formyl THF route): step 1/1. It functions in the pathway purine metabolism; IMP biosynthesis via de novo pathway; IMP from 5-formamido-1-(5-phospho-D-ribosyl)imidazole-4-carboxamide: step 1/1. This chain is Bifunctional purine biosynthesis protein PurH, found in Burkholderia orbicola (strain AU 1054).